A 508-amino-acid polypeptide reads, in one-letter code: Photosystem II CP47 reaction center protein (508 aa).

6 helical membrane passes run Ala21–Ser36, Ile101–Trp115, Gly140–Phe156, Ile203–Ser218, Val237–Val252, and Ile457–Arg472.

Belongs to the PsbB/PsbC family. PsbB subfamily. As to quaternary structure, PSII is composed of 1 copy each of membrane proteins PsbA, PsbB, PsbC, PsbD, PsbE, PsbF, PsbH, PsbI, PsbJ, PsbK, PsbL, PsbM, PsbT, PsbY, PsbZ, Psb30/Ycf12, at least 3 peripheral proteins of the oxygen-evolving complex and a large number of cofactors. It forms dimeric complexes. It depends on Binds multiple chlorophylls. PSII binds additional chlorophylls, carotenoids and specific lipids. as a cofactor.

The protein resides in the plastid. The protein localises to the chloroplast thylakoid membrane. In terms of biological role, one of the components of the core complex of photosystem II (PSII). It binds chlorophyll and helps catalyze the primary light-induced photochemical processes of PSII. PSII is a light-driven water:plastoquinone oxidoreductase, using light energy to abstract electrons from H(2)O, generating O(2) and a proton gradient subsequently used for ATP formation. This is Photosystem II CP47 reaction center protein from Bigelowiella natans (Pedinomonas minutissima).